The sequence spans 240 residues: Probable septum site-determining protein MinC (240 aa).

It belongs to the MinC family. As to quaternary structure, interacts with MinD and FtsZ.

In terms of biological role, cell division inhibitor that blocks the formation of polar Z ring septums. Rapidly oscillates between the poles of the cell to destabilize FtsZ filaments that have formed before they mature into polar Z rings. Prevents FtsZ polymerization. This is Probable septum site-determining protein MinC from Acinetobacter baumannii (strain ACICU).